The primary structure comprises 427 residues: MKKVEYWVKIPFGPIHPGLEEPEKFIITLDGERIVNVDVKLGYNLRGVQWIGMRRNYVQIMYLAERMCGICSFSHNHTYVRAVEEMAGIEVPERAEYIRVIVGELERIHSHLLNLGVVGHDIGYDTVLHLTWLARERVMDVLEAVSGNRVNYSMVTIGGVRRDIGEKQKRLILDMIKYYREVLPQIEDVFLHDSTIEARLRDVAVVPKKLAIEMGAVGPTARGSGIKEDSRWSEQLGVYPDLGIKPVTPEDVTGEKARGDVYDRMAVRIGELWMSLDLLEHALDQMPEGKIKTFPKDNILVAKLKLLGDGEGIGRYEAPRGELVHYVRGQKGRDGPVRWKPREPTFPNLFTIAKALEGNELADLVVAIASIDPCLSCTDRVAIVKEGKKVVLTEKDLLKLSIEKTKEINPNVKGDPTPTGIGCSRGV.

Ni(2+)-binding residues include cysteine 68, cysteine 71, cysteine 374, and cysteine 377.

The protein belongs to the complex I 49 kDa subunit family. In terms of assembly, the membrane-bound hydrogenase complex is composed of MbhK and MbhL, and may also contain MbhJ. Requires Ni(2+) as cofactor.

The protein localises to the cell membrane. It catalyses the reaction H2 + 2 oxidized [2Fe-2S]-[ferredoxin] = 2 reduced [2Fe-2S]-[ferredoxin] + 2 H(+). Inhibited by 0.1 mM Cu(2+). Alpha subunit of a hydrogen-evolving hydrogenase that utilizes protons both as a substrate for hydrogen production and proton translocation. Acts by coupling the redox reaction via ferredoxin and iron-sulfur (Fe-S) clusters to proton translocation across the membrane thereby conserving the redox energy in a proton gradient. This Pyrococcus furiosus (strain ATCC 43587 / DSM 3638 / JCM 8422 / Vc1) protein is Membrane-bound hydrogenase subunit alpha.